Consider the following 37-residue polypeptide: Large ribosomal subunit protein bL36 (37 aa).

This sequence belongs to the bacterial ribosomal protein bL36 family.

This is Large ribosomal subunit protein bL36 from Polaromonas naphthalenivorans (strain CJ2).